Reading from the N-terminus, the 361-residue chain is Hydroxycarboxylate dehydrogenase B (361 aa).

Residues His48, 122–124 (GRI), 178–182 (LLDYA), His234, Asn270, and 313–316 (GEWE) each bind NAD(+).

This sequence belongs to the LDH2/MDH2 oxidoreductase family.

It carries out the reaction 2-hydroxyglutarate + NADP(+) = 2-oxoglutarate + NADPH + H(+). The enzyme catalyses 2-hydroxyglutarate + NAD(+) = 2-oxoglutarate + NADH + H(+). The catalysed reaction is 3-phenyllactate + NADP(+) = 3-phenylpyruvate + NADPH + H(+). It catalyses the reaction 3-phenyllactate + NAD(+) = 3-phenylpyruvate + NADH + H(+). It carries out the reaction (2R)-2-hydroxy-3-(4-hydroxyphenyl)propanoate + NAD(+) = 3-(4-hydroxyphenyl)pyruvate + NADH + H(+). The enzyme catalyses (2R)-2-hydroxy-3-(4-hydroxyphenyl)propanoate + NADP(+) = 3-(4-hydroxyphenyl)pyruvate + NADPH + H(+). The catalysed reaction is (2R)-3-(3,4-dihydroxyphenyl)lactate + NADP(+) = 3-(3,4-dihydroxyphenyl)pyruvate + NADPH + H(+). It catalyses the reaction (2R)-3-(3,4-dihydroxyphenyl)lactate + NAD(+) = 3-(3,4-dihydroxyphenyl)pyruvate + NADH + H(+). Catalyzes the NAD(P)H-dependent reduction of 2-oxoglutarate, phenylpyruvate and (4-hydroxyphenyl)pyruvate, leading to the respective 2-hydroxycarboxylate in vitro. Shows a preference for NADPH over NADH as a redox partner. Do not catalyze the reverse reactions. The polypeptide is Hydroxycarboxylate dehydrogenase B (Escherichia coli (strain K12)).